Here is a 405-residue protein sequence, read N- to C-terminus: Arginine biosynthesis bifunctional protein ArgJ (405 aa).

Residues Thr-167, Lys-190, Thr-201, Glu-281, Asn-400, and Ser-405 each contribute to the substrate site. Thr-201 acts as the Nucleophile in catalysis.

This sequence belongs to the ArgJ family. As to quaternary structure, heterotetramer of two alpha and two beta chains.

The protein localises to the cytoplasm. It catalyses the reaction N(2)-acetyl-L-ornithine + L-glutamate = N-acetyl-L-glutamate + L-ornithine. The catalysed reaction is L-glutamate + acetyl-CoA = N-acetyl-L-glutamate + CoA + H(+). It functions in the pathway amino-acid biosynthesis; L-arginine biosynthesis; L-ornithine and N-acetyl-L-glutamate from L-glutamate and N(2)-acetyl-L-ornithine (cyclic): step 1/1. It participates in amino-acid biosynthesis; L-arginine biosynthesis; N(2)-acetyl-L-ornithine from L-glutamate: step 1/4. Catalyzes two activities which are involved in the cyclic version of arginine biosynthesis: the synthesis of N-acetylglutamate from glutamate and acetyl-CoA as the acetyl donor, and of ornithine by transacetylation between N(2)-acetylornithine and glutamate. This is Arginine biosynthesis bifunctional protein ArgJ from Nocardia farcinica (strain IFM 10152).